We begin with the raw amino-acid sequence, 261 residues long: MIELQDETTIKIKPLDLDMINPNPANFMDPNQGGSKIFIIGKSGSGKSTLIRSLFYNKSQIIPVAQAMSGTESETGFYRQFIPSAYIFDEYDSQALGNMIMRQKAARQYLANPWTMLIIDDCMDETSVFNKTPQPALFKNGRHWKMLYLVALQYALDVKPGIRSNIDGVFIFRESNVAIRKRLYDNYAGIIPTFQLFEKIMDEITKDYTALYIHNVTTSNDWRDCVFYYKAPFENQHVDQFKFGCCEYRGYGAKILKPHLK.

41-48 contacts ATP; the sequence is GKSGSGKS.

Belongs to the IIV-6 075L family.

This is an uncharacterized protein from Invertebrate iridescent virus 3 (IIV-3).